The sequence spans 190 residues: Xanthine phosphoribosyltransferase (190 aa).

Xanthine is bound by residues leucine 20 and asparagine 27. 127-131 (AYGNA) contributes to the 5-phospho-alpha-D-ribose 1-diphosphate binding site. Lysine 155 is a xanthine binding site.

This sequence belongs to the purine/pyrimidine phosphoribosyltransferase family. Xpt subfamily. Homodimer.

The protein localises to the cytoplasm. It carries out the reaction XMP + diphosphate = xanthine + 5-phospho-alpha-D-ribose 1-diphosphate. The protein operates within purine metabolism; XMP biosynthesis via salvage pathway; XMP from xanthine: step 1/1. Functionally, converts the preformed base xanthine, a product of nucleic acid breakdown, to xanthosine 5'-monophosphate (XMP), so it can be reused for RNA or DNA synthesis. In Bacteroides thetaiotaomicron (strain ATCC 29148 / DSM 2079 / JCM 5827 / CCUG 10774 / NCTC 10582 / VPI-5482 / E50), this protein is Xanthine phosphoribosyltransferase.